A 205-amino-acid polypeptide reads, in one-letter code: Small ribosomal subunit protein uS4 (205 aa).

The disordered stretch occupies residues 14–49 (RMGENIWGRPKSPVNRREYGPGQHGQRRKGKMSDFG). The S4 RNA-binding domain maps to 94 to 157 (SRLDAIVYRA…KQLVTVLEAV (64 aa)).

Belongs to the universal ribosomal protein uS4 family. As to quaternary structure, part of the 30S ribosomal subunit. Contacts protein S5. The interaction surface between S4 and S5 is involved in control of translational fidelity.

In terms of biological role, one of the primary rRNA binding proteins, it binds directly to 16S rRNA where it nucleates assembly of the body of the 30S subunit. Functionally, with S5 and S12 plays an important role in translational accuracy. The chain is Small ribosomal subunit protein uS4 from Agrobacterium fabrum (strain C58 / ATCC 33970) (Agrobacterium tumefaciens (strain C58)).